The primary structure comprises 827 residues: Lon protease (827 aa).

The Lon N-terminal domain maps to L38–L233. G384–T391 provides a ligand contact to ATP. Positions T619–P800 constitute a Lon proteolytic domain. Active-site residues include S706 and K749.

Belongs to the peptidase S16 family. As to quaternary structure, homohexamer. Organized in a ring with a central cavity.

The protein localises to the cytoplasm. It carries out the reaction Hydrolysis of proteins in presence of ATP.. Functionally, ATP-dependent serine protease that mediates the selective degradation of mutant and abnormal proteins as well as certain short-lived regulatory proteins. Required for cellular homeostasis and for survival from DNA damage and developmental changes induced by stress. Degrades polypeptides processively to yield small peptide fragments that are 5 to 10 amino acids long. Binds to DNA in a double-stranded, site-specific manner. The polypeptide is Lon protease (Amoebophilus asiaticus (strain 5a2)).